A 553-amino-acid chain; its full sequence is ATP synthase F(1) complex subunit alpha, mitochondrial (553 aa).

The N-terminal 43 residues, 1-43, are a transit peptide targeting the mitochondrion; the sequence is MLSVRVAAAVVRALPRRAGLVSRNALGSSFIAARNFHASNTHL. Phosphoserine occurs at positions 53 and 65. At S76 the chain carries Phosphoserine; alternate. O-linked (GlcNAc) serine; alternate glycosylation occurs at S76. Residue S106 is modified to Phosphoserine. N6-acetyllysine occurs at positions 123, 126, and 132. T134 carries the post-translational modification Phosphothreonine. N6-acetyllysine; alternate is present on K161. K161 is subject to N6-succinyllysine; alternate. S166 carries the phosphoserine modification. Residue K167 is modified to N6-acetyllysine; alternate. K167 is subject to N6-succinyllysine; alternate. At S184 the chain carries Phosphoserine. An Omega-N-methylarginine modification is found at R204. ATP-binding residues include Q215, G217, K218, T219, and S220. T219 serves as a coordination point for Mg(2+). 2 positions are modified to N6-acetyllysine; alternate: K230 and K239. An N6-succinyllysine; alternate mark is found at K230 and K239. At K240 the chain carries N6-acetyllysine. N6-acetyllysine; alternate is present on residues K261 and K305. N6-succinyllysine; alternate is present on residues K261 and K305. D312 provides a ligand contact to Mg(2+). K427 is modified (N6-acetyllysine; alternate). K427 carries the post-translational modification N6-succinyllysine; alternate. K434 carries the N6-acetyllysine modification. ATP is bound by residues Q473 and Q475. N6-acetyllysine; alternate occurs at positions 498, 506, 531, and 539. K498, K506, K531, and K539 each carry N6-succinyllysine; alternate. The residue at position 541 (K541) is an N6-acetyllysine.

It belongs to the ATPase alpha/beta chains family. Homotrimer. Component of the ATP synthase complex composed at least of ATP5F1A/subunit alpha, ATP5F1B/subunit beta, ATP5MC1/subunit c (homooctomer), MT-ATP6/subunit a, MT-ATP8/subunit 8, ATP5ME/subunit e, ATP5MF/subunit f, ATP5MG/subunit g, ATP5MK/subunit k, ATP5MJ/subunit j, ATP5F1C/subunit gamma, ATP5F1D/subunit delta, ATP5F1E/subunit epsilon, ATP5PF/subunit F6, ATP5PB/subunit b, ATP5PD/subunit d, ATP5PO/subunit OSCP. ATP synthase complex consists of a soluble F(1) head domain (subunits alpha(3) and beta(3)) - the catalytic core - and a membrane F(0) domain - the membrane proton channel (subunits c, a, 8, e, f, g, k and j). These two domains are linked by a central stalk (subunits gamma, delta, and epsilon) rotating inside the F1 region and a stationary peripheral stalk (subunits F6, b, d, and OSCP). Interacts with ATPAF2. Interacts with HRG; the interaction occurs on the surface of T-cells and alters the cell morphology when associated with concanavalin (in vitro). Interacts with PLG (angiostatin peptide); the interaction inhibits most of the angiogenic properties of angiostatin. Interacts with BLOC1S1. Interacts with BCL2L1 isoform BCL-X(L); the interaction mediates the association of BCL2L1 isoform BCL-X(L) with the mitochondrial membrane F(1)F(0) ATP synthase and enhances neurons metabolic efficiency. Interacts with CLN5 and PPT1. Interacts with S100A1; this interaction increases F1-ATPase activity. Interacts with ABCB7; this interaction allows the regulation of cellular iron homeostasis and cellular reactive oxygen species (ROS) levels in cardiomyocytes. Post-translationally, acetylated on lysine residues. BLOC1S1 is required for acetylation.

Its subcellular location is the mitochondrion inner membrane. The protein localises to the cell membrane. In terms of biological role, subunit alpha, of the mitochondrial membrane ATP synthase complex (F(1)F(0) ATP synthase or Complex V) that produces ATP from ADP in the presence of a proton gradient across the membrane which is generated by electron transport complexes of the respiratory chain. ATP synthase complex consist of a soluble F(1) head domain - the catalytic core - and a membrane F(1) domain - the membrane proton channel. These two domains are linked by a central stalk rotating inside the F(1) region and a stationary peripheral stalk. During catalysis, ATP synthesis in the catalytic domain of F(1) is coupled via a rotary mechanism of the central stalk subunits to proton translocation. In vivo, can only synthesize ATP although its ATP hydrolase activity can be activated artificially in vitro. With the catalytic subunit beta (ATP5F1B), forms the catalytic core in the F(1) domain. Subunit alpha does not bear the catalytic high-affinity ATP-binding sites. This chain is ATP synthase F(1) complex subunit alpha, mitochondrial, found in Pan troglodytes (Chimpanzee).